Here is a 1061-residue protein sequence, read N- to C-terminus: Transmembrane protease serine 9 (1061 aa).

The Cytoplasmic segment spans residues 3 to 31 (PAAPDLQPVPEVTKGVPVPTPDSGCCRAA). Residues 32–52 (VTTVVAISVASLTLGVLSAFL) form a helical membrane-spanning segment. Over 53 to 1061 (SAQGVQVEHT…LGWIGQNIRE (1009 aa)) the chain is Extracellular. In terms of domain architecture, LDL-receptor class A spans 155–192 (HCPGNAFSCQNSQCVSKENPECDDRVDCSDGSDEAQCD). Disulfide bonds link Cys156-Cys168, Cys163-Cys182, Cys176-Cys191, and Cys230-Cys246. Residues 205-438 (IVGGAEAAPG…LRDWILEVTS (234 aa)) enclose the Peptidase S1 1 domain. Catalysis depends on charge relay system residues His245 and Asp294. Intrachain disulfides connect Cys328-Cys395, Cys360-Cys374, and Cys385-Cys414. Catalysis depends on Ser389, which acts as the Charge relay system. Positions 443–499 (PVVPTEAPAPITPSTPWPTSPESRVPNTTAKPTVAPTPAPLHPSTAAKPQECGARPA) are disordered. The segment covering 452–461 (PITPSTPWPT) has biased composition (pro residues). Over residues 462-476 (SPESRVPNTTAKPTV) the composition is skewed to low complexity. N-linked (GlcNAc...) asparagine glycosylation occurs at Asn469. A Peptidase S1 2 domain is found at 506-738 (IVGGISAVSG…LKDWILKAMS (233 aa)). Cys531 and Cys547 are disulfide-bonded. Residue His546 is the Charge relay system of the active site. A glycan (N-linked (GlcNAc...) asparagine) is linked at Asn549. Residue Asp594 is the Charge relay system of the active site. 3 disulfide bridges follow: Cys628–Cys695, Cys660–Cys674, and Cys685–Cys714. N-linked (GlcNAc...) asparagine glycans are attached at residues Asn640 and Asn665. The Charge relay system role is filled by Ser689. Positions 740 to 752 (DPSSTAHPHTSST) are enriched in low complexity. Disordered stretches follow at residues 740-771 (DPSS…IPEA) and 790-810 (LNTT…APGT). An N-linked (GlcNAc...) asparagine glycan is attached at Asn791. A compositionally biased stretch (low complexity) spans 792–808 (TTLSARSTTTRRQTPAP). Residues 830-1060 (IVGGSAASLG…VLGWIGQNIR (231 aa)) enclose the Peptidase S1 3 domain. Disulfide bonds link Cys856–Cys872, Cys951–Cys1017, Cys982–Cys996, and Cys1007–Cys1036.

The protein belongs to the peptidase S1 family. Post-translationally, proteolytically cleaved to generate 3 independent serine protease chains. The cleaved chains may remain attached to the membrane thanks to disulfide bonds. It is unclear whether cleavage always takes place.

The protein localises to the cell membrane. Inhibited by serine protease inhibitors PMSF and 4-(2-aminoethyl)benzenesulfonyl fluoride, but not by EDTA. Functionally, serase-1 and serase-2 are serine proteases that hydrolyze the peptides N-t-Boc-Gln-Ala-Arg-AMC and N-t-Boc-Gln-Gly-Arg-AMC. In contrast, N-t-Boc-Ala-Phe-Lys-AMC and N-t-Boc-Ala-Pro-Ala-AMC are not significantly hydrolyzed. The chain is Transmembrane protease serine 9 (Tmprss9) from Rattus norvegicus (Rat).